We begin with the raw amino-acid sequence, 623 residues long: Putative pentatricopeptide repeat-containing protein At3g11460, mitochondrial (623 aa).

Residues 1 to 35 (MIVVTSFVRNSAVAAVASTPWNVRLRELAYQSLFS) constitute a mitochondrion transit peptide. 12 PPR repeats span residues 17–51 (ASTP…GSSP), 52–86 (DAFS…GCET), 87–117 (EPFV…NPQS), 120–154 (LSVC…GVSV), 155–189 (DSVT…GLDS), 190–220 (EVAV…MPVK), 221–255 (GLIT…GVCP), 256–290 (DPFT…GFVP), 291–321 (NVFV…MPVK), 322–356 (SLVS…GIRP), 357–387 (DGAV…MKRE), and 393–423 (GPEH…MPVE). The interval 428–503 (VWGALLGACK…KPGYSYVEHK (76 aa)) is type E motif. The type E(+) motif stretch occupies residues 504 to 535 (GRVHLFLAGDRSHEQTEEVHRMLDELETSVME). The interval 536-623 (LAGNMDCDRG…DGVCSCKDYW (88 aa)) is type DYW motif.

The protein belongs to the PPR family. PCMP-H subfamily. As to quaternary structure, interacts with MORF8/RIP1.

It localises to the mitochondrion. Involved in C-to-U editing of mitochondrial RNA. Required specifically for editing the mitochondrial NAD2 transcript. This Arabidopsis thaliana (Mouse-ear cress) protein is Putative pentatricopeptide repeat-containing protein At3g11460, mitochondrial (PCMP-H52).